The sequence spans 585 residues: Zinc finger protein Eos (585 aa).

Disordered stretches follow at residues 1 to 43 and 68 to 98; these read MHTP…PDFL and EKEFLGAPVGPSVSTPNSQHSSPSRSLSANS. Over residues 25–34 the composition is skewed to basic and acidic residues; sequence QGKDNLERDP. The segment covering 79 to 98 has biased composition (polar residues); it reads SVSTPNSQHSSPSRSLSANS. Lysine 100 is covalently cross-linked (Glycyl lysine isopeptide (Lys-Gly) (interchain with G-Cter in SUMO2)). Serine 105 carries the post-translational modification Phosphoserine. 4 consecutive C2H2-type zinc fingers follow at residues 159–181, 187–209, 215–237, and 248–271; these read LKCDVCGMVCIGPNVLMVHKRSH, FHCNQCGASFTQKGNLLRHIKLH, FKCPFCNYACRRRDALTGHLRTH, and YKCNYCGRSYKQQSTLEEHKERCH. An interaction with FOXP3 region spans residues 281-585; sequence AQALAGQPGD…HIVRGEHKVG (305 aa). Lysine 335 carries the post-translational modification N6-acetyllysine. Residues 410–489 are disordered; that stretch reads PGRLELPGSR…QPPPTIVVGR (80 aa). A CTBP-binding motif PEDLA motif is present at residues 425–429; the sequence is PEDLA. Residues 475–484 are compositionally biased toward pro residues; that stretch reads QGPPPQPPPT. Residue lysine 500 forms a Glycyl lysine isopeptide (Lys-Gly) (interchain with G-Cter in SUMO2) linkage. C2H2-type zinc fingers lie at residues 530–552 and 558–582; these read FKCEHCRILFLDHVMFTIHMGCH and FECNICGYHSQDRYEFSSHIVRGEH.

The protein belongs to the Ikaros C2H2-type zinc-finger protein family. Self-associates. Interacts with other family members; IKZF1, IKZF2, IKZF3 and IKZF5. Interacts with CTBP2. Interacts with SPI1, MITF, FOXP3 and CTBP1. Highly expressed in skeletal muscle, low levels of expression in heart, thymus, kidney, liver, and spleen. Expressed in the hematopoietic cell lines MOLT-4, NALM-6 and K-562. Highly expressed in THP-1 and M-07e cell lines, which have characteristics of myeloid and early megakaryocytic cells respectively.

Its subcellular location is the nucleus. Functionally, DNA-binding protein that binds to the 5'GGGAATRCC-3' Ikaros-binding sequence. Transcriptional repressor. Interacts with SPI1 and MITF to repress transcription of the CTSK and ACP5 promoters via recruitment of corepressors SIN3A and CTBP2. May be involved in the development of central and peripheral nervous systems. Essential for the inhibitory function of regulatory T-cells (Treg). Mediates FOXP3-mediated gene silencing in regulatory T-cells (Treg) via recruitment of corepressor CTBP1. This chain is Zinc finger protein Eos (IKZF4), found in Homo sapiens (Human).